The chain runs to 140 residues: ATP synthase epsilon chain (140 aa).

Belongs to the ATPase epsilon chain family. F-type ATPases have 2 components, CF(1) - the catalytic core - and CF(0) - the membrane proton channel. CF(1) has five subunits: alpha(3), beta(3), gamma(1), delta(1), epsilon(1). CF(0) has three main subunits: a, b and c.

It is found in the cell inner membrane. In terms of biological role, produces ATP from ADP in the presence of a proton gradient across the membrane. The chain is ATP synthase epsilon chain from Xanthomonas axonopodis pv. citri (strain 306).